We begin with the raw amino-acid sequence, 213 residues long: Heterochromatin protein 1 (213 aa).

Disordered stretches follow at residues 1–24 (MGKK…EEEY) and 74–151 (RKDE…TGFD). The 59-residue stretch at 24 to 82 (YAVEKILDRRVRKGKVEYYLKWKGYAETENTWEPEGNLDCQDLIQQYELSRKDEANAAA) folds into the Chromo 1 domain. A compositionally biased stretch (basic and acidic residues) spans 89–104 (SKKERPGSSTKVKETG). Residues 105 to 115 (RTSTTASNSSG) are compositionally biased toward polar residues. In terms of domain architecture, Chromo 2 spans 154 to 212 (LEAEKILGASDNNGRLTFLIQFKGVDQAEMVPSTVANVKIPQMVIRFYEERLSWYSDNE).

The protein localises to the nucleus. Structural component of heterochromatin, involved in gene repression and the modification of position-effect-variegation. Recognizes and binds histone H3 tails methylated at 'Lys-9', leading to epigenetic repression. This is Heterochromatin protein 1 (HP1A) from Drosophila virilis (Fruit fly).